The following is a 585-amino-acid chain: Neopullulanase 2 (585 aa).

Residues N143, D145, N148, D149, G169, and D171 each contribute to the Ca(2+) site. Substrate contacts are provided by H244 and R323. D325 acts as the Nucleophile in catalysis. Catalysis depends on E354, which acts as the Proton donor. Substrate-binding positions include 420–421 (HD), D465, and R469.

Belongs to the glycosyl hydrolase 13 family. In terms of assembly, monomer. The cofactor is Ca(2+).

The catalysed reaction is Hydrolysis of pullulan to panose (6-alpha-D-glucosylmaltose).. Its function is as follows. Hydrolyzes pullulan efficiently but only a small amount of starch. Endohydrolysis of 1,4-alpha-glucosidic linkages in pullulan to form panose. Also cleaves (1-6)-alpha-glucosidic linkages to form maltotriose. This is Neopullulanase 2 (tvaII) from Thermoactinomyces vulgaris.